We begin with the raw amino-acid sequence, 404 residues long: MAVGMAAPHATYASDPARSRGRLFDEPPSKTRSAFRRDCDRVIHSTAFRRLKHKTQVFVYHEGDHYRTRLTHTLEVAQIARALARQLGLDEDLTEALALAHDLGHPPFGHAGERALDACLDGYGGFDHNAQTLRIVTLLEHRYPDFDGLNLTWETLEGVVKHNGPLADRACNAIGRYQRRGIPVGIADFNRRHDLELWSFASLEAQVAAIADDIAYDAHDIDDGLRAGLFAVDDLKAMPLTAAMIADIARRHPLLDDHRRGAALVRGLISHLITAVVSEAERRLADARPQSVDEVRRHGQALIAFPPAAAEAEALIKAFLKQRMYRHPRVMRVMGEAETIVRDLFARYRDDPAALPAEWLPEDGESRELDAERARRIGNFIAGMTDRFAITEHRRLFDSTPELR.

Residues 1–32 form a disordered region; sequence MAVGMAAPHATYASDPARSRGRLFDEPPSKTR. Positions 22-32 are enriched in basic and acidic residues; sequence RLFDEPPSKTR. Residues 69–217 enclose the HD domain; sequence RLTHTLEVAQ…AAIADDIAYD (149 aa).

Belongs to the dGTPase family. Type 2 subfamily.

In Nitrobacter hamburgensis (strain DSM 10229 / NCIMB 13809 / X14), this protein is Deoxyguanosinetriphosphate triphosphohydrolase-like protein.